A 450-amino-acid chain; its full sequence is Phosphoglucosamine mutase (450 aa).

S101 acts as the Phosphoserine intermediate in catalysis. Residues S101, D240, D242, and D244 each contribute to the Mg(2+) site. The residue at position 101 (S101) is a Phosphoserine.

This sequence belongs to the phosphohexose mutase family. It depends on Mg(2+) as a cofactor. Post-translationally, activated by phosphorylation.

The catalysed reaction is alpha-D-glucosamine 1-phosphate = D-glucosamine 6-phosphate. Catalyzes the conversion of glucosamine-6-phosphate to glucosamine-1-phosphate. The protein is Phosphoglucosamine mutase of Streptococcus pneumoniae serotype 19F (strain G54).